The sequence spans 160 residues: SsrA-binding protein (160 aa).

The protein belongs to the SmpB family.

Its subcellular location is the cytoplasm. In terms of biological role, required for rescue of stalled ribosomes mediated by trans-translation. Binds to transfer-messenger RNA (tmRNA), required for stable association of tmRNA with ribosomes. tmRNA and SmpB together mimic tRNA shape, replacing the anticodon stem-loop with SmpB. tmRNA is encoded by the ssrA gene; the 2 termini fold to resemble tRNA(Ala) and it encodes a 'tag peptide', a short internal open reading frame. During trans-translation Ala-aminoacylated tmRNA acts like a tRNA, entering the A-site of stalled ribosomes, displacing the stalled mRNA. The ribosome then switches to translate the ORF on the tmRNA; the nascent peptide is terminated with the 'tag peptide' encoded by the tmRNA and targeted for degradation. The ribosome is freed to recommence translation, which seems to be the essential function of trans-translation. The sequence is that of SsrA-binding protein from Pasteurella multocida (strain Pm70).